A 454-amino-acid polypeptide reads, in one-letter code: Phosphoglucosamine mutase (454 aa).

The active-site Phosphoserine intermediate is the Ser101. Ser101, Asp243, Asp245, and Asp247 together coordinate Mg(2+). A Phosphoserine modification is found at Ser101.

This sequence belongs to the phosphohexose mutase family. Mg(2+) serves as cofactor. Post-translationally, activated by phosphorylation.

The enzyme catalyses alpha-D-glucosamine 1-phosphate = D-glucosamine 6-phosphate. Its function is as follows. Catalyzes the conversion of glucosamine-6-phosphate to glucosamine-1-phosphate. The protein is Phosphoglucosamine mutase of Geobacter sp. (strain M21).